A 488-amino-acid polypeptide reads, in one-letter code: Germacrene A hydroxylase (488 aa).

The Cytoplasmic segment spans residues 1–6; it reads MELSLT. A helical; Signal-anchor for type II membrane protein transmembrane segment spans residues 7 to 23; that stretch reads TSIALATIVLILYKLAT. Residues 24-488 are Lumenal-facing; sequence RPKSNKKRLP…KTELILVPSF (465 aa). Residues Asn260 and Asn379 are each glycosylated (N-linked (GlcNAc...) asparagine). Position 432 (Cys432) interacts with heme.

The protein belongs to the cytochrome P450 family. The cofactor is heme.

The protein resides in the endoplasmic reticulum membrane. Its subcellular location is the microsome membrane. The catalysed reaction is (+)-(R)-germacrene A + 3 reduced [NADPH--hemoprotein reductase] + 3 O2 = germacra-1(10),4,11(13)-trien-12-oate + 3 oxidized [NADPH--hemoprotein reductase] + 4 H2O + 4 H(+). Its pathway is secondary metabolite biosynthesis; terpenoid biosynthesis. Its activity is regulated as follows. Inhibited by cytochrome C, miconazole, aminobenzotriazole, metyrapone and clotrimazole. Involved in the biosynthesis of germacrene-derived sesquiterpene lactones. Catalyzes three consecutive oxidations of germacrene A to produce germacrene A acid. Could also catalyze the three-step oxidation of non-natural substrate amorphadiene to artemisinic acid. Can use beta-elemene as substrate. This Cichorium intybus (Chicory) protein is Germacrene A hydroxylase.